The following is a 163-amino-acid chain: Cyanate hydratase (163 aa).

Catalysis depends on residues Arg-103, Glu-106, and Ser-129.

Belongs to the cyanase family.

It catalyses the reaction cyanate + hydrogencarbonate + 3 H(+) = NH4(+) + 2 CO2. Functionally, catalyzes the reaction of cyanate with bicarbonate to produce ammonia and carbon dioxide. This is Cyanate hydratase from Talaromyces marneffei (strain ATCC 18224 / CBS 334.59 / QM 7333) (Penicillium marneffei).